The chain runs to 324 residues: Beta-ketoacyl-[acyl-carrier-protein] synthase III (324 aa).

Catalysis depends on residues C112 and H249. Residues 250-254 (QANRR) form an ACP-binding region. N279 is a catalytic residue.

This sequence belongs to the thiolase-like superfamily. FabH family. In terms of assembly, homodimer.

Its subcellular location is the cytoplasm. The enzyme catalyses malonyl-[ACP] + acetyl-CoA + H(+) = 3-oxobutanoyl-[ACP] + CO2 + CoA. It participates in lipid metabolism; fatty acid biosynthesis. Catalyzes the condensation reaction of fatty acid synthesis by the addition to an acyl acceptor of two carbons from malonyl-ACP. Catalyzes the first condensation reaction which initiates fatty acid synthesis and may therefore play a role in governing the total rate of fatty acid production. Possesses both acetoacetyl-ACP synthase and acetyl transacylase activities. Its substrate specificity determines the biosynthesis of branched-chain and/or straight-chain of fatty acids. This chain is Beta-ketoacyl-[acyl-carrier-protein] synthase III, found in Streptococcus equi subsp. equi (strain 4047).